The sequence spans 419 residues: Serine hydroxymethyltransferase (419 aa).

Residues Leu-121 and 125–127 (GHL) each bind (6S)-5,6,7,8-tetrahydrofolate. Lys-229 is modified (N6-(pyridoxal phosphate)lysine). 354 to 356 (SPF) lines the (6S)-5,6,7,8-tetrahydrofolate pocket.

The protein belongs to the SHMT family. Homodimer. It depends on pyridoxal 5'-phosphate as a cofactor.

It localises to the cytoplasm. It carries out the reaction (6R)-5,10-methylene-5,6,7,8-tetrahydrofolate + glycine + H2O = (6S)-5,6,7,8-tetrahydrofolate + L-serine. It functions in the pathway one-carbon metabolism; tetrahydrofolate interconversion. The protein operates within amino-acid biosynthesis; glycine biosynthesis; glycine from L-serine: step 1/1. In terms of biological role, catalyzes the reversible interconversion of serine and glycine with tetrahydrofolate (THF) serving as the one-carbon carrier. This reaction serves as the major source of one-carbon groups required for the biosynthesis of purines, thymidylate, methionine, and other important biomolecules. Also exhibits THF-independent aldolase activity toward beta-hydroxyamino acids, producing glycine and aldehydes, via a retro-aldol mechanism. This chain is Serine hydroxymethyltransferase, found in Coxiella burnetii (strain RSA 331 / Henzerling II).